A 468-amino-acid chain; its full sequence is MSGRNRSRSGTPSPKVTFKQESDGSDSESERRNGNRNGARPKNNNSRGSAPKPEKPKAAPPQNVSWFAPLVQTGKAELRFPRGEGVPVSQGVDSTYEHGYWLRTQRSFQKGGKQVLANPRWYFYYTGTGRFGDLRFGTKNPDIVWVGQEGANINRLGDMGTRNPSNDGAIPVQLAGGIPKGFYAEGRGSRGNSRSSSRNSSRASSRGNSRASSRGASPGRPAANPSTEPWMAYLVQKLERLESQVSGTKPATKNPVQVTKNEAAANAKKLRHKRTAHKGSGVTVNYGRRGPGDLEGNFGDREMIKLGTDDPRFAAAAQMAPNVSSFLFMSHLSTRDEDDALWLHYKGAIKLPKDDPNYEQWTKILAENLNAYKDFPPTEPKKDKKKKEETAQDTVIFEDASTGTDQTVVKVWVKDQDAQTDDEWLGGDETVYEDEDDRPKTQRRHKKRGSTASRVTIADPTNAGAERS.

The disordered stretch occupies residues 1 to 64 (MSGRNRSRSG…KPKAAPPQNV (64 aa)). Basic and acidic residues predominate over residues 18 to 33 (FKQESDGSDSESERRN). The interval 48-193 (GSAPKPEKPK…AEGRGSRGNS (146 aa)) is RNA-binding. The CoV N NTD domain maps to 62–186 (QNVSWFAPLV…GIPKGFYAEG (125 aa)). The RNA site is built by R106, R120, and R162. S165 carries the phosphoserine; by host modification. Disordered stretches follow at residues 181 to 228 (GFYA…PSTE), 373 to 399 (KDFPPTEPKKDKKKKEETAQDTVIFED), and 419 to 468 (QTDD…AERS). The span at 190 to 223 (RGNSRSSSRNSSRASSRGNSRASSRGASPGRPAA) shows a compositional bias: low complexity. In terms of domain architecture, CoV N CTD spans 259–376 (TKNEAAANAK…ENLNAYKDFP (118 aa)). Positions 270-373 (LRHKRTAHKG…ILAENLNAYK (104 aa)) are dimerization. The segment covering 379–390 (EPKKDKKKKEET) has biased composition (basic and acidic residues). Acidic residues predominate over residues 419–436 (QTDDEWLGGDETVYEDED). T451 carries the phosphothreonine; by host modification.

This sequence belongs to the betacoronavirus nucleocapsid protein family. In terms of assembly, homooligomer. Both monomeric and oligomeric forms interact with RNA. Interacts with protein M. Interacts with NSP3; this interaction serves to tether the genome to the newly translated replicase-transcriptase complex at a very early stage of infection. ADP-ribosylated. The ADP-ribosylation is retained in the virion during infection. In terms of processing, phosphorylated on serine and threonine residues.

It is found in the virion. Its subcellular location is the host endoplasmic reticulum-Golgi intermediate compartment. The protein resides in the host Golgi apparatus. In terms of biological role, packages the positive strand viral genome RNA into a helical ribonucleocapsid (RNP) and plays a fundamental role during virion assembly through its interactions with the viral genome and membrane protein M. Plays an important role in enhancing the efficiency of subgenomic viral RNA transcription as well as viral replication. This Rousettus leschenaultii (Leschenault's rousette) protein is Nucleoprotein.